A 200-amino-acid chain; its full sequence is NAD(P)H dehydrogenase (quinone) (200 aa).

The Flavodoxin-like domain maps to 4–191; the sequence is LLVLYYSMYG…TIARFQGEHV (188 aa). Residues 10–15 and 79–81 contribute to the FMN site; these read SMYGHV and TRF. Tyr-12 provides a ligand contact to NAD(+). Trp-99 contacts substrate. FMN-binding positions include 114 to 120 and His-135; that span reads STASQHG.

The protein belongs to the WrbA family. The cofactor is FMN.

It carries out the reaction a quinone + NADH + H(+) = a quinol + NAD(+). It catalyses the reaction a quinone + NADPH + H(+) = a quinol + NADP(+). In Nitrosococcus oceani (strain ATCC 19707 / BCRC 17464 / JCM 30415 / NCIMB 11848 / C-107), this protein is NAD(P)H dehydrogenase (quinone).